A 211-amino-acid chain; its full sequence is Beta-crystallin B3 (211 aa).

Met1 carries the N-acetylmethionine modification. An N-acetylalanine; in Beta-crystallin B3, N-terminally processed modification is found at Ala2. An N-terminal arm region spans residues 2-23; the sequence is AEQHGAPEQAAASKSHGGLGGS. Beta/gamma crystallin 'Greek key' domains follow at residues 24 to 63 and 64 to 108; these read YKVT…QVES and GPWL…RPLH. The segment at 109 to 113 is connecting peptide; it reads IDGPD. Beta/gamma crystallin 'Greek key' domains lie at 114–155 and 156–198; these read HKLH…RVIN and GTWV…RRIR. The tract at residues 200–211 is C-terminal arm; sequence QKWHKRGCFLSS.

The protein belongs to the beta/gamma-crystallin family. As to quaternary structure, homo/heterodimer, or complexes of higher-order. The structure of beta-crystallin oligomers seems to be stabilized through interactions between the N-terminal arms.

Its function is as follows. Crystallins are the dominant structural components of the vertebrate eye lens. This Rattus norvegicus (Rat) protein is Beta-crystallin B3 (Crybb3).